An 812-amino-acid chain; its full sequence is Phosphoenolpyruvate synthase (812 aa).

Residue histidine 430 is the Tele-phosphohistidine intermediate of the active site. Substrate is bound by residues arginine 520, arginine 588, glutamate 690, glycine 711, serine 712, asparagine 713, and aspartate 714. A Mg(2+)-binding site is contributed by glutamate 690. Residue aspartate 714 participates in Mg(2+) binding. Cysteine 761 acts as the Proton donor in catalysis.

This sequence belongs to the PEP-utilizing enzyme family. Mg(2+) serves as cofactor.

The catalysed reaction is pyruvate + ATP + H2O = phosphoenolpyruvate + AMP + phosphate + 2 H(+). It functions in the pathway carbohydrate biosynthesis; gluconeogenesis. Functionally, catalyzes the phosphorylation of pyruvate to phosphoenolpyruvate. The polypeptide is Phosphoenolpyruvate synthase (ppsA) (Helicobacter pylori (strain ATCC 700392 / 26695) (Campylobacter pylori)).